The chain runs to 607 residues: Glutamine--fructose-6-phosphate aminotransferase [isomerizing] (607 aa).

Residue Cys-2 is the Nucleophile; for GATase activity of the active site. Residues 2 to 217 form the Glutamine amidotransferase type-2 domain; that stretch reads CGIVGIVGHS…DGDWAVVRRD (216 aa). 2 SIS domains span residues 283–422 and 455–597; these read LPFD…ARGV and IARE…VDQP. Lys-602 serves as the catalytic For Fru-6P isomerization activity.

Homodimer.

The protein resides in the cytoplasm. The catalysed reaction is D-fructose 6-phosphate + L-glutamine = D-glucosamine 6-phosphate + L-glutamate. In terms of biological role, catalyzes the first step in hexosamine metabolism, converting fructose-6P into glucosamine-6P using glutamine as a nitrogen source. The chain is Glutamine--fructose-6-phosphate aminotransferase [isomerizing] from Mesorhizobium japonicum (strain LMG 29417 / CECT 9101 / MAFF 303099) (Mesorhizobium loti (strain MAFF 303099)).